Reading from the N-terminus, the 260-residue chain is Indole-3-glycerol phosphate synthase (260 aa).

Belongs to the TrpC family.

The catalysed reaction is 1-(2-carboxyphenylamino)-1-deoxy-D-ribulose 5-phosphate + H(+) = (1S,2R)-1-C-(indol-3-yl)glycerol 3-phosphate + CO2 + H2O. The protein operates within amino-acid biosynthesis; L-tryptophan biosynthesis; L-tryptophan from chorismate: step 4/5. This chain is Indole-3-glycerol phosphate synthase, found in Staphylococcus aureus (strain bovine RF122 / ET3-1).